The chain runs to 349 residues: Septin-2 (349 aa).

The 273-residue stretch at 33 to 305 (KGFEFTLMVV…ENFRSERLKR (273 aa)) folds into the Septin-type G domain. A G1 motif region spans residues 43 to 50 (GESGLGKS). GTP-binding positions include 43 to 50 (GESGLGKS), threonine 77, glycine 103, 182 to 190 (KADTLTLKE), glycine 240, and arginine 255. The tract at residues 100–103 (DTPG) is G3 motif. A G4 motif region spans residues 181–184 (AKAD). Positions 259–269 (WGVVEVENPEH) are important for dimerization.

Belongs to the TRAFAC class TrmE-Era-EngA-EngB-Septin-like GTPase superfamily. Septin GTPase family. As to quaternary structure, septins polymerize into heterooligomeric protein complexes that form filaments, and associate with cellular membranes, actin filaments and microtubules. GTPase activity is required for filament formation. Can form heterooligomers with other family members and form filaments.

The protein localises to the cytoplasm. It is found in the cytoskeleton. Its subcellular location is the spindle. The protein resides in the cleavage furrow. It localises to the midbody. The protein localises to the cell cortex. It is found in the cell projection. Its subcellular location is the cilium membrane. Functionally, filament-forming cytoskeletal GTPase. Required for normal organization of the actin cytoskeleton. Plays a role in the biogenesis of polarized columnar-shaped epithelium by maintaining polyglutamylated microtubules, thus facilitating efficient vesicle transport, and by impeding MAP4 binding to tubulin. Required for the progression through mitosis. Forms a scaffold at the midplane of the mitotic splindle required to maintain CENPE localization at kinetochores and consequently chromosome congression. During anaphase, may be required for chromosome segregation and spindle elongation. Plays a role in ciliogenesis and collective cell movements. In cilia, required for the integrity of the diffusion barrier at the base of the primary cilium that prevents diffusion of transmembrane proteins between the cilia and plasma membranes. The protein is Septin-2 of Gallus gallus (Chicken).